The primary structure comprises 653 residues: UvrABC system protein B (653 aa).

Residues 25–182 form the Helicase ATP-binding domain; the sequence is EGIERGVREQ…EKLVELQYKS (158 aa). ATP is bound at residue 38–45; that stretch reads GVTGSGKT. The Beta-hairpin signature appears at 91-114; it reads YYDYYQPEAYIPHSDVYIEKDALI. Positions 429 to 591 constitute a Helicase C-terminal domain; that stretch reads QIADVVNESQ…ITPKSISKSV (163 aa). The UVR domain occupies 616–651; it reads EEDIIKLQKEMLLHAENLEFEKALEIRNQINKLSQH.

Belongs to the UvrB family. In terms of assembly, forms a heterotetramer with UvrA during the search for lesions. Interacts with UvrC in an incision complex.

It is found in the cytoplasm. Functionally, the UvrABC repair system catalyzes the recognition and processing of DNA lesions. A damage recognition complex composed of 2 UvrA and 2 UvrB subunits scans DNA for abnormalities. Upon binding of the UvrA(2)B(2) complex to a putative damaged site, the DNA wraps around one UvrB monomer. DNA wrap is dependent on ATP binding by UvrB and probably causes local melting of the DNA helix, facilitating insertion of UvrB beta-hairpin between the DNA strands. Then UvrB probes one DNA strand for the presence of a lesion. If a lesion is found the UvrA subunits dissociate and the UvrB-DNA preincision complex is formed. This complex is subsequently bound by UvrC and the second UvrB is released. If no lesion is found, the DNA wraps around the other UvrB subunit that will check the other stand for damage. The polypeptide is UvrABC system protein B (Anaplasma phagocytophilum (strain HZ)).